The primary structure comprises 312 residues: Porphobilinogen deaminase (312 aa).

The residue at position 235 (C235) is an S-(dipyrrolylmethanemethyl)cysteine.

It belongs to the HMBS family. In terms of assembly, monomer. Dipyrromethane serves as cofactor.

The catalysed reaction is 4 porphobilinogen + H2O = hydroxymethylbilane + 4 NH4(+). It participates in porphyrin-containing compound metabolism; protoporphyrin-IX biosynthesis; coproporphyrinogen-III from 5-aminolevulinate: step 2/4. Tetrapolymerization of the monopyrrole PBG into the hydroxymethylbilane pre-uroporphyrinogen in several discrete steps. In Mycolicibacterium gilvum (strain PYR-GCK) (Mycobacterium gilvum (strain PYR-GCK)), this protein is Porphobilinogen deaminase.